The chain runs to 140 residues: Auxin-responsive protein IAA26 (140 aa).

The interval 1 to 40 is disordered; that stretch reads MASYGDDGVELTELTLGPPGASARRARRGRKNGHPPPSSS. The EAR-like (transcriptional repression) motif lies at 14–18; it reads LTLGP. Basic residues predominate over residues 24–33; the sequence is RRARRGRKNG. Positions 45-130 constitute a PB1 domain; it reads AYFVKVSMDG…SCKRMRVMRA (86 aa).

It belongs to the Aux/IAA family. As to quaternary structure, homodimers and heterodimers. Expressed in roots, seedlings and flowers.

Its subcellular location is the nucleus. Aux/IAA proteins are short-lived transcriptional factors that function as repressors of early auxin response genes at low auxin concentrations. In Oryza sativa subsp. japonica (Rice), this protein is Auxin-responsive protein IAA26 (IAA26).